The chain runs to 208 residues: Small ribosomal subunit protein uS4 (208 aa).

In terms of domain architecture, S4 RNA-binding spans 98–159 (RRLDNVAYRL…KSRKVAAISE (62 aa)).

Belongs to the universal ribosomal protein uS4 family. Part of the 30S ribosomal subunit. Contacts protein S5. The interaction surface between S4 and S5 is involved in control of translational fidelity.

Its function is as follows. One of the primary rRNA binding proteins, it binds directly to 16S rRNA where it nucleates assembly of the body of the 30S subunit. In terms of biological role, with S5 and S12 plays an important role in translational accuracy. This Citrifermentans bemidjiense (strain ATCC BAA-1014 / DSM 16622 / JCM 12645 / Bem) (Geobacter bemidjiensis) protein is Small ribosomal subunit protein uS4.